Here is a 396-residue protein sequence, read N- to C-terminus: Phosphoglycerate kinase (396 aa).

Substrate contacts are provided by residues 21–23 (DIN), arginine 36, 59–62 (HFGR), arginine 118, and arginine 151. ATP contacts are provided by residues lysine 201, glutamate 323, and 353-356 (GGDT).

Belongs to the phosphoglycerate kinase family. As to quaternary structure, monomer.

It localises to the cytoplasm. The enzyme catalyses (2R)-3-phosphoglycerate + ATP = (2R)-3-phospho-glyceroyl phosphate + ADP. It functions in the pathway carbohydrate degradation; glycolysis; pyruvate from D-glyceraldehyde 3-phosphate: step 2/5. In Ruegeria sp. (strain TM1040) (Silicibacter sp.), this protein is Phosphoglycerate kinase.